The primary structure comprises 411 residues: Citrate synthase (411 aa).

Catalysis depends on residues His-304 and Asp-363.

The protein belongs to the citrate synthase family.

It carries out the reaction oxaloacetate + acetyl-CoA + H2O = citrate + CoA + H(+). Its pathway is carbohydrate metabolism; tricarboxylic acid cycle; isocitrate from oxaloacetate: step 1/2. The protein is Citrate synthase (gltA) of Rickettsia conorii subsp. caspia (strain A-167) (Astrakhan rickettsia).